A 150-amino-acid polypeptide reads, in one-letter code: MADGLTKSAARNIFYGGSLFFFLLFAALTAHSHWYMVNKSTDNEGLTESVVAGKHIWEKNMCINCHSIMGEGAYFAPELSNVWERYGGHQNPEAARAGLAAWIRAQPLGTQGRRQMPAYDFTDEEMSSLIDFLEWTDGIDDQDWPPHPAG.

The chain crosses the membrane as a helical; Signal-anchor span at residues 13–29 (IFYGGSLFFFLLFAALT). Heme c-binding residues include C62, C65, and H66.

Heterodimer of cytochromes b (large subunit) and c (small subunit).

Its subcellular location is the cell membrane. Functionally, component of the anaerobic respiratory chain that transforms nitrate to dinitrogen (denitrification). The chain is Nitric oxide reductase subunit C (norC) from Halomonas halodenitrificans (Paracoccus halodenitrificans).